We begin with the raw amino-acid sequence, 640 residues long: RecBCD enzyme subunit RecD (640 aa).

194–201 contacts ATP; the sequence is GGPGTGKT.

Belongs to the RecD family. In terms of assembly, heterotrimer of RecB, RecC and RecD. All subunits contribute to DNA-binding.

It carries out the reaction Couples ATP hydrolysis with the unwinding of duplex DNA at the replication fork by translocating in the 5'-3' direction. This creates two antiparallel DNA single strands (ssDNA). The leading ssDNA polymer is the template for DNA polymerase III holoenzyme which synthesizes a continuous strand.. The catalysed reaction is ATP + H2O = ADP + phosphate + H(+). In terms of biological role, a helicase/nuclease that prepares dsDNA breaks (DSB) for recombinational DNA repair. Binds to DSBs and unwinds DNA via a highly rapid and processive ATP-dependent bidirectional helicase activity. Unwinds dsDNA until it encounters a Chi (crossover hotspot instigator) sequence from the 3' direction. Cuts ssDNA a few nucleotides 3' to the Chi site. The properties and activities of the enzyme are changed at Chi. The Chi-altered holoenzyme produces a long 3'-ssDNA overhang and facilitates RecA-binding to the ssDNA for homologous DNA recombination and repair. Holoenzyme degrades any linearized DNA that is unable to undergo homologous recombination. In the holoenzyme this subunit has ssDNA-dependent ATPase and 5'-3' helicase activity. When added to pre-assembled RecBC greatly stimulates nuclease activity and augments holoenzyme processivity. Negatively regulates the RecA-loading ability of RecBCD. This is RecBCD enzyme subunit RecD from Haemophilus influenzae (strain ATCC 51907 / DSM 11121 / KW20 / Rd).